Here is a 239-residue protein sequence, read N- to C-terminus: MRTEAEAAGQPLEPGDFVQLPVPIIQQLYHWDCGLACSRMVLRYLGQLDDGEFENALQELQLTRSIWTIDLAYLMRHFGVRHRFCTQTLGVDKGYKNQSFYRKHFDTEETRVNQLFAQAKACKVQVEKCTVSVQDIQVHLAQGHVAIVLVNSGVLHCDLCSSPVKYCCFTPSGHRCFCRTPDYQGHFIVLRGYNRATGCIFYNNPAYADRMCSTSISNFEEARTSYGTDEDILFVYLDS.

The chain is Protein GUCD1 (Gucd1) from Mus musculus (Mouse).